The following is a 417-amino-acid chain: NADH-quinone oxidoreductase subunit D (417 aa).

This sequence belongs to the complex I 49 kDa subunit family. As to quaternary structure, NDH-1 is composed of 14 different subunits. Subunits NuoB, C, D, E, F, and G constitute the peripheral sector of the complex.

It localises to the cell inner membrane. The enzyme catalyses a quinone + NADH + 5 H(+)(in) = a quinol + NAD(+) + 4 H(+)(out). In terms of biological role, NDH-1 shuttles electrons from NADH, via FMN and iron-sulfur (Fe-S) centers, to quinones in the respiratory chain. The immediate electron acceptor for the enzyme in this species is believed to be ubiquinone. Couples the redox reaction to proton translocation (for every two electrons transferred, four hydrogen ions are translocated across the cytoplasmic membrane), and thus conserves the redox energy in a proton gradient. The sequence is that of NADH-quinone oxidoreductase subunit D from Cupriavidus necator (strain ATCC 17699 / DSM 428 / KCTC 22496 / NCIMB 10442 / H16 / Stanier 337) (Ralstonia eutropha).